A 197-amino-acid polypeptide reads, in one-letter code: Molybdenum cofactor guanylyltransferase (197 aa).

GTP contacts are provided by residues 10 to 12 (LAG), K23, N51, D69, and D99. Residue D99 participates in Mg(2+) binding.

The protein belongs to the MobA family. As to quaternary structure, monomer. The cofactor is Mg(2+).

Its subcellular location is the cytoplasm. The catalysed reaction is Mo-molybdopterin + GTP + H(+) = Mo-molybdopterin guanine dinucleotide + diphosphate. In terms of biological role, transfers a GMP moiety from GTP to Mo-molybdopterin (Mo-MPT) cofactor (Moco or molybdenum cofactor) to form Mo-molybdopterin guanine dinucleotide (Mo-MGD) cofactor. The protein is Molybdenum cofactor guanylyltransferase of Shewanella sp. (strain MR-4).